The chain runs to 311 residues: Coproporphyrin III ferrochelatase (311 aa).

Fe-coproporphyrin III-binding positions include tyrosine 12, arginine 29, 45–46 (RY), serine 53, and tyrosine 124. Fe(2+) is bound by residues histidine 182 and glutamate 263.

Belongs to the ferrochelatase family.

The protein localises to the cytoplasm. The enzyme catalyses Fe-coproporphyrin III + 2 H(+) = coproporphyrin III + Fe(2+). It participates in porphyrin-containing compound metabolism; protoheme biosynthesis. Involved in coproporphyrin-dependent heme b biosynthesis. Catalyzes the insertion of ferrous iron into coproporphyrin III to form Fe-coproporphyrin III. In Bacillus mycoides (strain KBAB4) (Bacillus weihenstephanensis), this protein is Coproporphyrin III ferrochelatase.